The chain runs to 204 residues: MSKINKEIAIFIVFLILVALWGLFVKVPVEETKTPDPESQVSGMTIQFKDGISESEVRTILQNCNMTRNYRMTYDNSSEDYYIMADKDNWSDIRRELVDEMKETNKKNWTVSTPAHVIRKEDYYVLPISGQAIKDEKFLAILDKYDIGVEKFLWCDISFLYSDGPLTYWIPKEDAIRIKNELEQNDNIFSVQFDYLFPPFDPTT.

This sequence belongs to the UPF0228 family.

In Methanosarcina acetivorans (strain ATCC 35395 / DSM 2834 / JCM 12185 / C2A), this protein is UPF0228 protein MA_0511.